The primary structure comprises 63 residues: Large ribosomal subunit protein bL28 (63 aa).

The disordered stretch occupies residues 1–21 (MSRRDDLTGKGPMFGNNRSHA).

This sequence belongs to the bacterial ribosomal protein bL28 family.

This chain is Large ribosomal subunit protein bL28, found in Mycoplasmopsis pulmonis (strain UAB CTIP) (Mycoplasma pulmonis).